The following is a 55-amino-acid chain: MDKPTVETSAAPVETLVLTEPPAETQAEDSVSSVLAGLTAAIETVDRLRTAFGAE.

A disordered region spans residues 1 to 30; that stretch reads MDKPTVETSAAPVETLVLTEPPAETQAEDS.

This is an uncharacterized protein from Frog virus 3 (isolate Goorha) (FV-3).